We begin with the raw amino-acid sequence, 475 residues long: Methylenetetrahydrofolate--tRNA-(uracil-5-)-methyltransferase TrmFO (475 aa).

13–18 lines the FAD pocket; it reads GAGLAG.

It belongs to the MnmG family. TrmFO subfamily. FAD serves as cofactor.

It localises to the cytoplasm. It catalyses the reaction uridine(54) in tRNA + (6R)-5,10-methylene-5,6,7,8-tetrahydrofolate + NADH + H(+) = 5-methyluridine(54) in tRNA + (6S)-5,6,7,8-tetrahydrofolate + NAD(+). The enzyme catalyses uridine(54) in tRNA + (6R)-5,10-methylene-5,6,7,8-tetrahydrofolate + NADPH + H(+) = 5-methyluridine(54) in tRNA + (6S)-5,6,7,8-tetrahydrofolate + NADP(+). Functionally, catalyzes the folate-dependent formation of 5-methyl-uridine at position 54 (M-5-U54) in all tRNAs. This chain is Methylenetetrahydrofolate--tRNA-(uracil-5-)-methyltransferase TrmFO, found in Bradyrhizobium diazoefficiens (strain JCM 10833 / BCRC 13528 / IAM 13628 / NBRC 14792 / USDA 110).